The primary structure comprises 1134 residues: Protocadherin-18 (1134 aa).

An N-terminal signal peptide occupies residues 1 to 27 (MYQMNAKMHFTFVFALLVVSFNLDVLG). 6 consecutive Cadherin domains span residues 28–137 (KNLK…SPQF), 138–246 (SRSL…SPAF), 247–354 (EQQS…KPEI), 361–465 (PGKE…PPHF), 466–576 (QRSR…VPVV), and 582–697 (RNNT…APLD). Residues 28–699 (KNLKYRIYEE…SVSQAPLDVS (672 aa)) lie on the Extracellular side of the membrane. An N-linked (GlcNAc...) asparagine glycan is attached at N103. N-linked (GlcNAc...) asparagine glycosylation occurs at N269. N-linked (GlcNAc...) asparagine glycosylation occurs at N559. A helical transmembrane segment spans residues 700–720 (MIIIISLGAICAVLLVIMVLF). Residues 721–1134 (ATRCNREKKD…NKLLQDVRQS (414 aa)) lie on the Cytoplasmic side of the membrane. Disordered stretches follow at residues 768–800 (TLPIRSHHRSSPSSSPTLERGQMGSRQSHNSHQ), 868–888 (SLKDSGRGDSEAGDSDYDLGR), and 941–1003 (DYRS…TSSL). Polar residues predominate over residues 791-800 (GSRQSHNSHQ). Residues 868–877 (SLKDSGRGDS) show a composition bias toward basic and acidic residues. Residues 892–1134 (IDRLLGEGFS…NKLLQDVRQS (243 aa)) form an interaction with DAB1 region.

In terms of assembly, interacts with DAB1.

The protein resides in the cell membrane. Its function is as follows. Potential calcium-dependent cell-adhesion protein. This Bos taurus (Bovine) protein is Protocadherin-18 (PCDH18).